We begin with the raw amino-acid sequence, 198 residues long: Phycocyanobilin lyase CpcT homolog (198 aa).

It belongs to the CpcT/CpeT biliprotein lyase family.

Functionally, covalently attaches a chromophore to Cys residue(s) of phycobiliproteins. In vitro is not seen to act as a chromophore lyase for ApcA1, ApcA2, ApcB, ApcD, ApcF, CpcB or PecB, the lyase activity is therefore unsure. The protein is Phycocyanobilin lyase CpcT homolog (cpcT2) of Nostoc sp. (strain PCC 7120 / SAG 25.82 / UTEX 2576).